Consider the following 111-residue polypeptide: uncharacterized protein (111 aa).

Belongs to the UPF0440 family.

This is an uncharacterized protein from Pyrococcus furiosus (strain ATCC 43587 / DSM 3638 / JCM 8422 / Vc1).